Here is a 251-residue protein sequence, read N- to C-terminus: Hydroxyacylglutathione hydrolase (251 aa).

Zn(2+) is bound by residues His-53, His-55, Asp-57, His-58, His-110, Asp-127, and His-165.

It belongs to the metallo-beta-lactamase superfamily. Glyoxalase II family. As to quaternary structure, monomer. Zn(2+) is required as a cofactor.

The enzyme catalyses an S-(2-hydroxyacyl)glutathione + H2O = a 2-hydroxy carboxylate + glutathione + H(+). Its pathway is secondary metabolite metabolism; methylglyoxal degradation; (R)-lactate from methylglyoxal: step 2/2. Functionally, thiolesterase that catalyzes the hydrolysis of S-D-lactoyl-glutathione to form glutathione and D-lactic acid. The polypeptide is Hydroxyacylglutathione hydrolase (Pectobacterium carotovorum subsp. carotovorum (strain PC1)).